We begin with the raw amino-acid sequence, 287 residues long: Protease HtpX homolog (287 aa).

Helical transmembrane passes span 4-24 and 35-53; these read VGLF…VMSL and LLLM…SLAL. Histidine 139 serves as a coordination point for Zn(2+). Glutamate 140 is a catalytic residue. A Zn(2+)-binding site is contributed by histidine 143. A run of 2 helical transmembrane segments spans residues 147-167 and 194-214; these read GDMV…IFLS and AVSM…VMWF. Glutamate 219 is a Zn(2+) binding site.

Belongs to the peptidase M48B family. Zn(2+) serves as cofactor.

It localises to the cell inner membrane. The polypeptide is Protease HtpX homolog (Desulfotalea psychrophila (strain LSv54 / DSM 12343)).